We begin with the raw amino-acid sequence, 1918 residues long: Diacylglycerol kinase eta (1918 aa).

The segment covering 1 to 10 has biased composition (basic and acidic residues); it reads MAHLKLDTLH. The interval 1–37 is disordered; the sequence is MAHLKLDTLHVQRSPRGSRRSSPSSGRSSACSSGSIS. Residues 20–37 are compositionally biased toward low complexity; sequence RSSPSSGRSSACSSGSIS. Residues 82–175 form the PH domain; sequence AIIKEGFLLK…WLGGLKTATA (94 aa). Phorbol-ester/DAG-type zinc fingers lie at residues 195–245 and 268–319; these read HHHW…IANC and PHQW…AVAC. Positions 350–486 constitute a DAGKc domain; that stretch reads GNFSPLLVFV…DRWSIMVFEK (137 aa). 4 disordered regions span residues 783 to 805, 1017 to 1067, 1177 to 1212, and 1380 to 1399; these read GANIDDAGNRLSPCSDGGENTPT, TTLC…DDNP, PNTILTTSTSPTKKSGHGQDISVVVRPPTPLRGDSI, and ERDKEERGGKDKDKTPTEEA. Over residues 1177–1189 the composition is skewed to polar residues; sequence PNTILTTSTSPTK. One can recognise an SAM domain in the interval 1855-1918; the sequence is WSVNEVVTWL…LQAIKDLSEN (64 aa).

The protein belongs to the eukaryotic diacylglycerol kinase family.

The protein localises to the cytoplasm. The enzyme catalyses a 1,2-diacyl-sn-glycerol + ATP = a 1,2-diacyl-sn-glycero-3-phosphate + ADP + H(+). In terms of biological role, phosphorylates diacylglycerol (DAG) to generate phosphatidic acid (PA). This is Diacylglycerol kinase eta from Drosophila erecta (Fruit fly).